A 424-amino-acid polypeptide reads, in one-letter code: Phosphoprotein associated with glycosphingolipid-enriched microdomains 1 (424 aa).

Residues M1–M17 are Extracellular-facing. A helical; Signal-anchor for type III membrane protein transmembrane segment spans residues V18–L38. Residues C39 and C42 are each lipidated (S-palmitoyl cysteine). Residues C39–L424 are Cytoplasmic-facing. S52 and S63 each carry phosphoserine. Y107 is subject to Phosphotyrosine; by LYN. S157 is modified (phosphoserine). A phosphotyrosine mark is found at Y165, Y183, and Y224. Positions D194–C347 are disordered. The span at A215–N230 shows a compositional bias: basic and acidic residues. Position 226 is a phosphoserine (S226). The segment covering S236 to S247 has biased composition (polar residues). A Phosphotyrosine; by FYN and LYN modification is found at Y314. Positions Y314–V317 are interaction with CSK. Polar residues predominate over residues S331–C347. Phosphoserine is present on S346. Phosphotyrosine occurs at positions 351, 381, and 409. The interval P361 to L424 is disordered. The interval T422–L424 is interaction with NHERF1.

As to quaternary structure, interacts with NHERF1/EBP50. In resting T-cells, part of a PAG1-NHERF1-MSN complex which is disrupted upon TCR activation. When phosphorylated, interacts with CSK. Identified in a complex with LYN and STAT3. Interacts with LYN. In terms of processing, palmitoylated. Post-translationally, phosphorylated by FYN on Tyr-314 in resting T-cells; which promotes interaction with CSK. Dephosphorylated by PTPRC/CD45 upon TCR activation; which leads to CSK dissociation. May also be dephosphorylated by PTPN11. Hyperphosphorylated in mast cells upon FCER1 activation. Phosphorylated by LYN in response to EPO. In terms of tissue distribution, ubiquitously expressed, with highest levels in developing brain, lung, thymus, spleen and testis. Present in mast cells.

It localises to the cell membrane. Its function is as follows. Negatively regulates TCR (T-cell antigen receptor)-mediated signaling in T-cells and FCER1 (high affinity immunoglobulin epsilon receptor)-mediated signaling in mast cells. Promotes CSK activation and recruitment to lipid rafts, which results in LCK inhibition. Inhibits immunological synapse formation by preventing dynamic arrangement of lipid raft proteins. May be involved in cell adhesion signaling. The polypeptide is Phosphoprotein associated with glycosphingolipid-enriched microdomains 1 (Pag1) (Rattus norvegicus (Rat)).